The chain runs to 332 residues: Ribose-phosphate pyrophosphokinase (332 aa).

ATP contacts are provided by residues 43-45 (DGE) and 102-103 (RQ). Positions 136 and 176 each coordinate Mg(2+). Lys-199 is an active-site residue. Residues Arg-201, Asp-225, and 229–233 (DTGGT) each bind D-ribose 5-phosphate.

The protein belongs to the ribose-phosphate pyrophosphokinase family. Class I subfamily. In terms of assembly, homohexamer. It depends on Mg(2+) as a cofactor.

Its subcellular location is the cytoplasm. It catalyses the reaction D-ribose 5-phosphate + ATP = 5-phospho-alpha-D-ribose 1-diphosphate + AMP + H(+). The protein operates within metabolic intermediate biosynthesis; 5-phospho-alpha-D-ribose 1-diphosphate biosynthesis; 5-phospho-alpha-D-ribose 1-diphosphate from D-ribose 5-phosphate (route I): step 1/1. In terms of biological role, involved in the biosynthesis of the central metabolite phospho-alpha-D-ribosyl-1-pyrophosphate (PRPP) via the transfer of pyrophosphoryl group from ATP to 1-hydroxyl of ribose-5-phosphate (Rib-5-P). In Mycoplasma genitalium (strain ATCC 33530 / DSM 19775 / NCTC 10195 / G37) (Mycoplasmoides genitalium), this protein is Ribose-phosphate pyrophosphokinase.